The sequence spans 158 residues: Pathogenesis-related protein 2 (158 aa).

The protein belongs to the BetVI family.

The protein is Pathogenesis-related protein 2 (PR2) of Petroselinum crispum (Parsley).